We begin with the raw amino-acid sequence, 317 residues long: Melanocyte-stimulating hormone receptor (317 aa).

Over Met-1–Glu-37 the chain is Extracellular. Asn-29 carries N-linked (GlcNAc...) asparagine glycosylation. Residues Val-38–Ile-63 form a helical membrane-spanning segment. At Ala-64 to Pro-72 the chain is on the cytoplasmic side. A helical membrane pass occupies residues Met-73–Leu-93. Over Glu-94–Asn-118 the chain is Extracellular. A helical transmembrane segment spans residues Val-119–Val-140. Residues Asp-141 to Arg-163 are Cytoplasmic-facing. Residues Ala-164–Tyr-183 traverse the membrane as a helical segment. The Extracellular segment spans residues Asp-184 to Cys-191. Residues Leu-192–Leu-211 traverse the membrane as a helical segment. Residues Ala-212–Ala-240 are Cytoplasmic-facing. Residues Ala-241–Leu-266 traverse the membrane as a helical segment. Topologically, residues Cys-267 to Asn-279 are extracellular. A helical membrane pass occupies residues Phe-280–Phe-300. The Cytoplasmic segment spans residues Arg-301 to Trp-317. The S-palmitoyl cysteine moiety is linked to residue Cys-315.

This sequence belongs to the G-protein coupled receptor 1 family. In terms of assembly, interacts with MGRN1, but does not undergo MGRN1-mediated ubiquitination; this interaction competes with GNAS-binding and thus inhibits agonist-induced cAMP production. Interacts with OPN3; the interaction results in a decrease in MC1R-mediated cAMP signaling and ultimately a decrease in melanin production in melanocytes.

It is found in the cell membrane. In terms of biological role, receptor for MSH (alpha, beta and gamma) and ACTH. The activity of this receptor is mediated by G proteins which activate adenylate cyclase. Mediates melanogenesis, the production of eumelanin (black/brown) and phaeomelanin (red/yellow), via regulation of cAMP signaling in melanocytes. In Macaca sylvanus (Barbary macaque), this protein is Melanocyte-stimulating hormone receptor (MC1R).